Consider the following 610-residue polypeptide: tRNA uridine 5-carboxymethylaminomethyl modification enzyme MnmG (610 aa).

Residue 14 to 19 (GAGHAG) participates in FAD binding. 274–288 (GPRYCPSIEDKIVKF) is an NAD(+) binding site.

This sequence belongs to the MnmG family. In terms of assembly, homodimer. Heterotetramer of two MnmE and two MnmG subunits. The cofactor is FAD.

The protein localises to the cytoplasm. Its function is as follows. NAD-binding protein involved in the addition of a carboxymethylaminomethyl (cmnm) group at the wobble position (U34) of certain tRNAs, forming tRNA-cmnm(5)s(2)U34. The polypeptide is tRNA uridine 5-carboxymethylaminomethyl modification enzyme MnmG (Chlamydia trachomatis serovar D (strain ATCC VR-885 / DSM 19411 / UW-3/Cx)).